We begin with the raw amino-acid sequence, 444 residues long: MFSKPLQTIYTVSRLNREIRALLEQGFASLVLTGEISNFITPASGHWYFSLKDDKAQIKAAMWRGNNRNQSYRPINGAQVTVKARVSLYEPRGDYQLIVEHMEPAGEGQFKQEFDALKMRLAAEGLFSSVYKKPLPQNINRIGVITSATGAAIKDILTVLKRRAPQLEVIIYPAMVQGKDAHLQLIKQIELANIRSEVDVLILGRGGGSLEDLWCFNHEQLARAIFNSQLPIVSAVGHEIDTTISDYVADVRAATPSAAAELVSPNTQELHNKVTQLVNRLANAFKHDMSEKRAQALQLQHRLNLCHPRNQLNQKAQRLDELSIALQQAMRNSLYQQERTLNNLTPRLMRQSPDKKLTQASHQLAQLQTRLNQAIQQQLQQANNSLALQASRLDSVSPLNVLARGYSITKTDKQKVVKSVADVKVGDTLITELVDGTLHSQVLS.

Belongs to the XseA family. As to quaternary structure, heterooligomer composed of large and small subunits.

It is found in the cytoplasm. The enzyme catalyses Exonucleolytic cleavage in either 5'- to 3'- or 3'- to 5'-direction to yield nucleoside 5'-phosphates.. Functionally, bidirectionally degrades single-stranded DNA into large acid-insoluble oligonucleotides, which are then degraded further into small acid-soluble oligonucleotides. The protein is Exodeoxyribonuclease 7 large subunit of Pseudoalteromonas translucida (strain TAC 125).